Reading from the N-terminus, the 179-residue chain is UPF0302 protein YpiB (179 aa).

It belongs to the UPF0302 family.

This Bacillus subtilis (strain 168) protein is UPF0302 protein YpiB (ypiB).